The primary structure comprises 514 residues: MTDKLIIFDTTLRDGEQSPGASMTKEEKIRIAKHLERMKVDVIEAGFAASSNGDFDAIHTIAGLVKDSTICSLARANDKDIQRAADALKPANSARIHTFIATSPLHMEKKLRMTPDQVFEQARLAVRFARKFTDNVEFSPEDGSRSDLDFLCRVLEAVIAEGATTINIADTVGYGVPELYGNLVKTLRERIPNSDKAIFSVHCHNDLGMAVANSLAGVKIGGARQIECTINGLGERAGNTSLEEIVMAVKTRKDYFGLDVGIDTTQIVPTSKLVSQITGFVVQPNKAVVGANAFAHASGIHQDGVLKARDTYEIMRAEDVGWTANKIVLGKLSGRNAFKQRLQELGVSLDSEAELNAAFMRFKDLADRKAEIFDEDIIAIVSEESALAQEQEHFKFVSLSQRSETGEQPQAKVVFAVEGKEVTGEARGNGPVDATFNAIEGEVGSGSELLLYSVNAITTGTQAQGEVTVRLSKSGRIVNGVGTDPDIVAASAKAYISALNKLHSKDDKLNPQRA.

The 264-residue stretch at 5–268 (LIIFDTTLRD…DVGIDTTQIV (264 aa)) folds into the Pyruvate carboxyltransferase domain. Residues D14, H202, H204, and N239 each coordinate Mn(2+). A regulatory domain region spans residues 395–514 (KFVSLSQRSE…KDDKLNPQRA (120 aa)).

The protein belongs to the alpha-IPM synthase/homocitrate synthase family. LeuA type 1 subfamily. In terms of assembly, homodimer. The cofactor is Mn(2+).

It is found in the cytoplasm. It carries out the reaction 3-methyl-2-oxobutanoate + acetyl-CoA + H2O = (2S)-2-isopropylmalate + CoA + H(+). The protein operates within amino-acid biosynthesis; L-leucine biosynthesis; L-leucine from 3-methyl-2-oxobutanoate: step 1/4. Functionally, catalyzes the condensation of the acetyl group of acetyl-CoA with 3-methyl-2-oxobutanoate (2-ketoisovalerate) to form 3-carboxy-3-hydroxy-4-methylpentanoate (2-isopropylmalate). The protein is 2-isopropylmalate synthase of Burkholderia cenocepacia (strain HI2424).